Reading from the N-terminus, the 323-residue chain is Probable proline iminopeptidase (323 aa).

In terms of domain architecture, AB hydrolase-1 spans 37 to 301 (VVLHGGPGSR…VIVDEAGHDA (265 aa)). Serine 114 serves as the catalytic Nucleophile. Aspartate 271 is a catalytic residue. The active-site Proton donor is the histidine 299.

The protein belongs to the peptidase S33 family.

The protein localises to the cytoplasm. The enzyme catalyses Release of N-terminal proline from a peptide.. Functionally, specifically catalyzes the removal of N-terminal proline residues from peptides. This is Probable proline iminopeptidase from Streptomyces coelicolor (strain ATCC BAA-471 / A3(2) / M145).